We begin with the raw amino-acid sequence, 113 residues long: Immunoglobulin lambda variable 2-23 (113 aa).

The N-terminal stretch at 1-19 (MAWALLLLTLLTQDTGSWA) is a signal peptide. Gln20 bears the Pyrrolidone carboxylic acid mark. Residues 20 to 44 (QSALTQPASVSGSPGQSITISCTGT) are framework-1. Positions 20-113 (QSALTQPASV…EADYYCCSYA (94 aa)) constitute an Ig-like domain. Residues Cys41 and Cys109 are joined by a disulfide bond. The segment at 45 to 53 (SSDVGSYNL) is complementarity-determining-1. The tract at residues 54 to 70 (VSWYQQHPGKAPKLMIY) is framework-2. Residues 71–73 (EGS) are complementarity-determining-2. Residues 73 to 92 (SKRPSGVSNRFSGSKSGNTA) are disordered. The interval 74–109 (KRPSGVSNRFSGSKSGNTASLTISGLQAEDEADYYC) is framework-3. The span at 78 to 92 (GVSNRFSGSKSGNTA) shows a compositional bias: polar residues. A complementarity-determining-3 region spans residues 110–113 (CSYA).

In terms of assembly, immunoglobulins are composed of two identical heavy chains and two identical light chains; disulfide-linked.

Its subcellular location is the secreted. The protein resides in the cell membrane. In terms of biological role, v region of the variable domain of immunoglobulin light chains that participates in the antigen recognition. Immunoglobulins, also known as antibodies, are membrane-bound or secreted glycoproteins produced by B lymphocytes. In the recognition phase of humoral immunity, the membrane-bound immunoglobulins serve as receptors which, upon binding of a specific antigen, trigger the clonal expansion and differentiation of B lymphocytes into immunoglobulins-secreting plasma cells. Secreted immunoglobulins mediate the effector phase of humoral immunity, which results in the elimination of bound antigens. The antigen binding site is formed by the variable domain of one heavy chain, together with that of its associated light chain. Thus, each immunoglobulin has two antigen binding sites with remarkable affinity for a particular antigen. The variable domains are assembled by a process called V-(D)-J rearrangement and can then be subjected to somatic hypermutations which, after exposure to antigen and selection, allow affinity maturation for a particular antigen. The polypeptide is Immunoglobulin lambda variable 2-23 (Homo sapiens (Human)).